The chain runs to 324 residues: Rho crystallin (324 aa).

At threonine 2 the chain carries N-acetylthreonine. Serine 218 to asparagine 281 serves as a coordination point for NADP(+).

Belongs to the aldo/keto reductase family. Monomer.

The polypeptide is Rho crystallin (Rana temporaria (European common frog)).